The chain runs to 439 residues: ATP-dependent RNA helicase RhlB (439 aa).

The Q motif signature appears at 9–37; sequence QKFADLPLHPEVKQALAENGFEFCTPIQA. The 180-residue stretch at 40 to 219 folds into the Helicase ATP-binding domain; it reads LPVLLQSKDI…YDHMNDPVKV (180 aa). 53 to 60 contributes to the ATP binding site; the sequence is AQTGTGKT. A DEAD box motif is present at residues 165-168; it reads DEAD. The region spanning 243–390 is the Helicase C-terminal domain; sequence KMRLLLTLIE…VSNYDRDALL (148 aa). The tract at residues 395–439 is disordered; it reads SPVKIHRKHPAGARNLRERSGAGRTPGAHRSGGRPPRHDRTRRQP. Over residues 425 to 439 the composition is skewed to basic residues; that stretch reads SGGRPPRHDRTRRQP.

It belongs to the DEAD box helicase family. RhlB subfamily. Component of the RNA degradosome, which is a multiprotein complex involved in RNA processing and mRNA degradation.

Its subcellular location is the cytoplasm. The catalysed reaction is ATP + H2O = ADP + phosphate + H(+). In terms of biological role, DEAD-box RNA helicase involved in RNA degradation. Has RNA-dependent ATPase activity and unwinds double-stranded RNA. The polypeptide is ATP-dependent RNA helicase RhlB (Shewanella oneidensis (strain ATCC 700550 / JCM 31522 / CIP 106686 / LMG 19005 / NCIMB 14063 / MR-1)).